The following is a 608-amino-acid chain: Kinetochore protein NUF2 (608 aa).

Residues 121–125 (IGNLR) form a required for nuclear localization and function region. 2 coiled-coil regions span residues 176 to 319 (FESQ…QQKL) and 358 to 460 (REKL…IEEE).

Belongs to the NUF2 family.

Its subcellular location is the chromosome. It is found in the centromere. The protein localises to the kinetochore. Functionally, required for anchoring centrosomal cores to the nuclear periphery. Plays a role in chromosome segregation but is dispensable for centromere clustering. This chain is Kinetochore protein NUF2, found in Toxoplasma gondii (strain ATCC 50611 / Me49).